A 249-amino-acid chain; its full sequence is Secreted flagellin C (249 aa).

As to quaternary structure, interacts with FliS.

It is found in the secreted. In terms of biological role, might play a role in virulence. The chain is Secreted flagellin C (flaC) from Campylobacter jejuni subsp. jejuni serotype O:6 (strain 81116 / NCTC 11828).